Here is a 445-residue protein sequence, read N- to C-terminus: Tubulin beta-2 chain (445 aa).

Gln12, Glu73, Ser142, Gly146, Thr147, Gly148, Asn208, and Asn230 together coordinate GTP. Residue Glu73 coordinates Mg(2+).

It belongs to the tubulin family. Dimer of alpha and beta chains. A typical microtubule is a hollow water-filled tube with an outer diameter of 25 nm and an inner diameter of 15 nM. Alpha-beta heterodimers associate head-to-tail to form protofilaments running lengthwise along the microtubule wall with the beta-tubulin subunit facing the microtubule plus end conferring a structural polarity. Microtubules usually have 13 protofilaments but different protofilament numbers can be found in some organisms and specialized cells. It depends on Mg(2+) as a cofactor.

The protein resides in the cytoplasm. The protein localises to the cytoskeleton. In terms of biological role, tubulin is the major constituent of microtubules, a cylinder consisting of laterally associated linear protofilaments composed of alpha- and beta-tubulin heterodimers. Microtubules grow by the addition of GTP-tubulin dimers to the microtubule end, where a stabilizing cap forms. Below the cap, tubulin dimers are in GDP-bound state, owing to GTPase activity of alpha-tubulin. The protein is Tubulin beta-2 chain (TUBB2) of Suillus bovinus (Jersey cow bolete).